The following is a 269-amino-acid chain: Flagellar hook-basal body complex protein FlhP (269 aa).

The stretch at 7 to 65 (TASTTLNQLQQQIDTISSNLSNSNTTGYKAKDTNFSELVRQQFDQVDEKNEEVAKARKT) forms a coiled coil.

This sequence belongs to the flagella basal body rod proteins family.

This Bacillus subtilis (strain 168) protein is Flagellar hook-basal body complex protein FlhP (flhP).